The chain runs to 207 residues: MPRSSLAQLAPLPRAFFNRDPRIVGRELLGKVLLRREGRAILAGRIVECEAYLGADDAAAHSAAGKTARNAVLFGPPGYAYVYFIYGNHFCLNVSCLPDGQAGGILFRALEPIAGVERMAANRQLEPSQLRLIASGPGRLAEALAVTRDRDNGKDMVSPKSDLRIVDDGFGAVEVRETPRIGITKSADLPLRYIVAGSPFVSGKRYL.

This sequence belongs to the DNA glycosylase MPG family.

The sequence is that of Putative 3-methyladenine DNA glycosylase from Koribacter versatilis (strain Ellin345).